A 383-amino-acid polypeptide reads, in one-letter code: tRNA-specific 2-thiouridylase MnmA (383 aa).

Residues 30-37 and Leu-56 contribute to the ATP site; that span reads GLSGGVDS. The active-site Nucleophile is Cys-117. The cysteines at positions 117 and 216 are disulfide-linked. An ATP-binding site is contributed by Gly-142. The tract at residues 166–168 is interaction with tRNA; the sequence is KDQ. Cys-216 serves as the catalytic Cysteine persulfide intermediate. The interaction with tRNA stretch occupies residues 321–322; that stretch reads RY.

This sequence belongs to the MnmA/TRMU family.

The protein resides in the cytoplasm. It catalyses the reaction S-sulfanyl-L-cysteinyl-[protein] + uridine(34) in tRNA + AH2 + ATP = 2-thiouridine(34) in tRNA + L-cysteinyl-[protein] + A + AMP + diphosphate + H(+). In terms of biological role, catalyzes the 2-thiolation of uridine at the wobble position (U34) of tRNA, leading to the formation of s(2)U34. This chain is tRNA-specific 2-thiouridylase MnmA, found in Synechococcus sp. (strain CC9605).